Consider the following 99-residue polypeptide: Plastocyanin (99 aa).

In terms of domain architecture, Plastocyanin-like spans 1–99; that stretch reads IEVLLGSDDG…AGMVGKVTVN (99 aa). Positions 37, 84, 87, and 92 each coordinate Cu cation.

Belongs to the plastocyanin family. The cofactor is Cu(2+).

The protein resides in the plastid. Its subcellular location is the chloroplast thylakoid membrane. Its function is as follows. Participates in electron transfer between P700 and the cytochrome b6-f complex in photosystem I. The polypeptide is Plastocyanin (PETE) (Solanum crispum (Chilean potato-tree)).